The sequence spans 282 residues: 2-dehydro-3-deoxyphosphooctonate aldolase (282 aa).

This sequence belongs to the KdsA family.

It is found in the cytoplasm. The enzyme catalyses D-arabinose 5-phosphate + phosphoenolpyruvate + H2O = 3-deoxy-alpha-D-manno-2-octulosonate-8-phosphate + phosphate. It functions in the pathway carbohydrate biosynthesis; 3-deoxy-D-manno-octulosonate biosynthesis; 3-deoxy-D-manno-octulosonate from D-ribulose 5-phosphate: step 2/3. Its pathway is bacterial outer membrane biogenesis; lipopolysaccharide biosynthesis. In Bordetella avium (strain 197N), this protein is 2-dehydro-3-deoxyphosphooctonate aldolase.